The chain runs to 418 residues: Argininosuccinate synthase (418 aa).

ATP is bound at residue 16–24 (AYSGGLDTS). L-citrulline is bound at residue Tyr95. Gly125 contributes to the ATP binding site. 3 residues coordinate L-aspartate: Thr127, Asn131, and Asp132. Asn131 provides a ligand contact to L-citrulline. Positions 135, 183, 267, and 279 each coordinate L-citrulline.

Belongs to the argininosuccinate synthase family. Type 1 subfamily. Homotetramer.

It localises to the cytoplasm. It catalyses the reaction L-citrulline + L-aspartate + ATP = 2-(N(omega)-L-arginino)succinate + AMP + diphosphate + H(+). Its pathway is amino-acid biosynthesis; L-arginine biosynthesis; L-arginine from L-ornithine and carbamoyl phosphate: step 2/3. The chain is Argininosuccinate synthase from Bifidobacterium adolescentis (strain ATCC 15703 / DSM 20083 / NCTC 11814 / E194a).